The sequence spans 198 residues: V-type proton ATPase subunit E (198 aa).

This sequence belongs to the V-ATPase E subunit family.

In terms of biological role, produces ATP from ADP in the presence of a proton gradient across the membrane. In Borrelia duttonii (strain Ly), this protein is V-type proton ATPase subunit E.